The sequence spans 61 residues: Probable tautomerase lin2709 (61 aa).

Residue Pro-2 is the Proton acceptor; via imino nitrogen of the active site.

The protein belongs to the 4-oxalocrotonate tautomerase family.

This Listeria innocua serovar 6a (strain ATCC BAA-680 / CLIP 11262) protein is Probable tautomerase lin2709.